The following is a 131-amino-acid chain: Small ribosomal subunit protein uS9 (131 aa).

Belongs to the universal ribosomal protein uS9 family.

This Actinobacillus pleuropneumoniae serotype 5b (strain L20) protein is Small ribosomal subunit protein uS9.